Consider the following 508-residue polypeptide: Bifunctional purine biosynthesis protein PurH (508 aa).

An MGS-like domain is found at 1 to 145 (MTKRALISVS…KNHQYVTVIV (145 aa)).

This sequence belongs to the PurH family.

It catalyses the reaction (6R)-10-formyltetrahydrofolate + 5-amino-1-(5-phospho-beta-D-ribosyl)imidazole-4-carboxamide = 5-formamido-1-(5-phospho-D-ribosyl)imidazole-4-carboxamide + (6S)-5,6,7,8-tetrahydrofolate. It carries out the reaction IMP + H2O = 5-formamido-1-(5-phospho-D-ribosyl)imidazole-4-carboxamide. It participates in purine metabolism; IMP biosynthesis via de novo pathway; 5-formamido-1-(5-phospho-D-ribosyl)imidazole-4-carboxamide from 5-amino-1-(5-phospho-D-ribosyl)imidazole-4-carboxamide (10-formyl THF route): step 1/1. The protein operates within purine metabolism; IMP biosynthesis via de novo pathway; IMP from 5-formamido-1-(5-phospho-D-ribosyl)imidazole-4-carboxamide: step 1/1. This is Bifunctional purine biosynthesis protein PurH from Lysinibacillus sphaericus (strain C3-41).